The sequence spans 283 residues: Protein/nucleic acid deglycase HchA (283 aa).

Residues H86, E91, and H123 each coordinate Zn(2+). The Nucleophile role is filled by C185.

The protein belongs to the peptidase C56 family. HchA subfamily. As to quaternary structure, homodimer.

Its subcellular location is the cytoplasm. The catalysed reaction is N(omega)-(1-hydroxy-2-oxopropyl)-L-arginyl-[protein] + H2O = lactate + L-arginyl-[protein] + H(+). It carries out the reaction N(6)-(1-hydroxy-2-oxopropyl)-L-lysyl-[protein] + H2O = lactate + L-lysyl-[protein] + H(+). It catalyses the reaction S-(1-hydroxy-2-oxopropyl)-L-cysteinyl-[protein] + H2O = lactate + L-cysteinyl-[protein] + H(+). The enzyme catalyses N(omega)-(1-hydroxy-2-oxoethyl)-L-arginyl-[protein] + H2O = L-arginyl-[protein] + glycolate + H(+). The catalysed reaction is N(6)-(1-hydroxy-2-oxoethyl)-L-lysyl-[protein] + H2O = glycolate + L-lysyl-[protein] + H(+). It carries out the reaction S-(1-hydroxy-2-oxoethyl)-L-cysteinyl-[protein] + H2O = glycolate + L-cysteinyl-[protein] + H(+). It catalyses the reaction N(2)-(1-hydroxy-2-oxopropyl)-dGTP + H2O = lactate + dGTP + H(+). The enzyme catalyses N(2)-(1-hydroxy-2-oxopropyl)-GTP + H2O = lactate + GTP + H(+). The catalysed reaction is N(2)-(1-hydroxy-2-oxopropyl)-GDP + H2O = lactate + GDP + H(+). It carries out the reaction N(2)-(1-hydroxy-2-oxopropyl)-GMP + H2O = lactate + GMP + H(+). It catalyses the reaction N(2)-(1-hydroxy-2-oxoethyl)-dGTP + H2O = dGTP + glycolate + H(+). The enzyme catalyses N(2)-(1-hydroxy-2-oxoethyl)-GTP + H2O = glycolate + GTP + H(+). The catalysed reaction is N(2)-(1-hydroxy-2-oxoethyl)-GDP + H2O = glycolate + GDP + H(+). It carries out the reaction N(2)-(1-hydroxy-2-oxoethyl)-GMP + H2O = glycolate + GMP + H(+). It catalyses the reaction an N(2)-(1-hydroxy-2-oxopropyl)-guanosine in RNA + H2O = a guanosine in RNA + lactate + H(+). The enzyme catalyses an N(2)-(1-hydroxy-2-oxopropyl)-2'-deoxyguanosine in DNA + H2O = a 2'-deoxyguanosine in DNA + lactate + H(+). The catalysed reaction is an N(2)-(1-hydroxy-2-oxoethyl)-guanosine in RNA + H2O = a guanosine in RNA + glycolate + H(+). It carries out the reaction an N(2)-(1-hydroxy-2-oxoethyl)-2'-deoxyguanosine in DNA + H2O = a 2'-deoxyguanosine in DNA + glycolate + H(+). Its function is as follows. Protein and nucleotide deglycase that catalyzes the deglycation of the Maillard adducts formed between amino groups of proteins or nucleotides and reactive carbonyl groups of glyoxals. Thus, functions as a protein deglycase that repairs methylglyoxal- and glyoxal-glycated proteins, and releases repaired proteins and lactate or glycolate, respectively. Deglycates cysteine, arginine and lysine residues in proteins, and thus reactivates these proteins by reversing glycation by glyoxals. Acts on early glycation intermediates (hemithioacetals and aminocarbinols), preventing the formation of Schiff bases and advanced glycation endproducts (AGE). Also functions as a nucleotide deglycase able to repair glycated guanine in the free nucleotide pool (GTP, GDP, GMP, dGTP) and in DNA and RNA. Is thus involved in a major nucleotide repair system named guanine glycation repair (GG repair), dedicated to reversing methylglyoxal and glyoxal damage via nucleotide sanitization and direct nucleic acid repair. Plays an important role in protecting cells from carbonyl stress. In Escherichia coli (strain 55989 / EAEC), this protein is Protein/nucleic acid deglycase HchA.